Consider the following 285-residue polypeptide: Bifunctional protein FolD (285 aa).

Position 166–168 (166–168 (GAS)) interacts with NADP(+).

The protein belongs to the tetrahydrofolate dehydrogenase/cyclohydrolase family. In terms of assembly, homodimer.

The catalysed reaction is (6R)-5,10-methylene-5,6,7,8-tetrahydrofolate + NADP(+) = (6R)-5,10-methenyltetrahydrofolate + NADPH. The enzyme catalyses (6R)-5,10-methenyltetrahydrofolate + H2O = (6R)-10-formyltetrahydrofolate + H(+). It functions in the pathway one-carbon metabolism; tetrahydrofolate interconversion. In terms of biological role, catalyzes the oxidation of 5,10-methylenetetrahydrofolate to 5,10-methenyltetrahydrofolate and then the hydrolysis of 5,10-methenyltetrahydrofolate to 10-formyltetrahydrofolate. This is Bifunctional protein FolD from Thioalkalivibrio sulfidiphilus (strain HL-EbGR7).